Consider the following 522-residue polypeptide: Maturase K (522 aa).

The protein belongs to the intron maturase 2 family. MatK subfamily.

It is found in the plastid. Its subcellular location is the chloroplast. Usually encoded in the trnK tRNA gene intron. Probably assists in splicing its own and other chloroplast group II introns. The chain is Maturase K from Iris domestica (Leopard lily).